A 464-amino-acid chain; its full sequence is Argininosuccinate lyase (464 aa).

The protein belongs to the lyase 1 family. Argininosuccinate lyase subfamily.

The protein localises to the cytoplasm. It catalyses the reaction 2-(N(omega)-L-arginino)succinate = fumarate + L-arginine. It functions in the pathway amino-acid biosynthesis; L-arginine biosynthesis; L-arginine from L-ornithine and carbamoyl phosphate: step 3/3. This chain is Argininosuccinate lyase, found in Streptococcus suis (strain 98HAH33).